We begin with the raw amino-acid sequence, 258 residues long: Distal membrane-arm assembly complex protein 2 (258 aa).

Belongs to the ATP synthase subunit s family. As to quaternary structure, interacts with incompletely assembled mitochondrial NADH:ubiquinone oxidoreductase complex (complex I).

Its subcellular location is the mitochondrion. Required for the assembly of the mitochondrial NADH:ubiquinone oxidoreductase complex (complex I). Involved in the assembly of the distal region of complex I. This is Distal membrane-arm assembly complex protein 2 (Dmac2) from Mus musculus (Mouse).